A 396-amino-acid chain; its full sequence is Stearoyl-[acyl-carrier-protein] 9-desaturase, chloroplastic (396 aa).

The transit peptide at 1-33 directs the protein to the chloroplast; that stretch reads MALKLNPFLSQTQKLPSFALPPMASTRSPKFYM. Residues E138, E176, H179, E229, E262, and H265 each contribute to the Fe cation site.

The protein belongs to the fatty acid desaturase type 2 family. Homodimer. Fe(2+) serves as cofactor. As to expression, higher levels in developing seeds than in leaf and root tissues.

Its subcellular location is the plastid. The protein localises to the chloroplast. It catalyses the reaction octadecanoyl-[ACP] + 2 reduced [2Fe-2S]-[ferredoxin] + O2 + 2 H(+) = (9Z)-octadecenoyl-[ACP] + 2 oxidized [2Fe-2S]-[ferredoxin] + 2 H2O. Its pathway is lipid metabolism; fatty acid metabolism. Converts stearoyl-ACP to oleoyl-ACP by introduction of a cis double bond between carbons 9 and 10 of the acyl chain. In Ricinus communis (Castor bean), this protein is Stearoyl-[acyl-carrier-protein] 9-desaturase, chloroplastic.